Reading from the N-terminus, the 149-residue chain is Large ribosomal subunit protein uL22c (149 aa).

This sequence belongs to the universal ribosomal protein uL22 family. As to quaternary structure, part of the 50S ribosomal subunit.

The protein resides in the plastid. The protein localises to the chloroplast. Functionally, this protein binds specifically to 23S rRNA. In terms of biological role, the globular domain of the protein is located near the polypeptide exit tunnel on the outside of the subunit, while an extended beta-hairpin is found that lines the wall of the exit tunnel in the center of the 70S ribosome. The protein is Large ribosomal subunit protein uL22c (rpl22) of Brachypodium distachyon (Purple false brome).